The sequence spans 371 residues: Glutamate 5-kinase (371 aa).

Lys14 serves as a coordination point for ATP. Substrate-binding residues include Ser54, Asp141, and Asn153. 173 to 174 is a binding site for ATP; that stretch reads TD. The region spanning 280 to 357 is the PUA domain; that stretch reads AGDLILDDGA…TQIEKLLGYI (78 aa).

It belongs to the glutamate 5-kinase family.

It is found in the cytoplasm. It catalyses the reaction L-glutamate + ATP = L-glutamyl 5-phosphate + ADP. The protein operates within amino-acid biosynthesis; L-proline biosynthesis; L-glutamate 5-semialdehyde from L-glutamate: step 1/2. Its function is as follows. Catalyzes the transfer of a phosphate group to glutamate to form L-glutamate 5-phosphate. The chain is Glutamate 5-kinase from Aromatoleum aromaticum (strain DSM 19018 / LMG 30748 / EbN1) (Azoarcus sp. (strain EbN1)).